Here is a 174-residue protein sequence, read N- to C-terminus: Large ribosomal subunit protein uL5 (174 aa).

Belongs to the universal ribosomal protein uL5 family. In terms of assembly, part of the 50S ribosomal subunit; contacts the 5S rRNA and probably tRNA. Forms a bridge to the 30S subunit in the 70S ribosome.

Its function is as follows. This is one of the proteins that bind and probably mediate the attachment of the 5S RNA into the large ribosomal subunit, where it forms part of the central protuberance. In the 70S ribosome it contacts protein S13 of the 30S subunit (bridge B1b), connecting the 2 subunits; this bridge is implicated in subunit movement. May contact the P site tRNA; the 5S rRNA and some of its associated proteins might help stabilize positioning of ribosome-bound tRNAs. This Halorubrum lacusprofundi (strain ATCC 49239 / DSM 5036 / JCM 8891 / ACAM 34) protein is Large ribosomal subunit protein uL5.